A 638-amino-acid polypeptide reads, in one-letter code: NADH-ubiquinone oxidoreductase chain 5 (638 aa).

15 helical membrane passes run 7–27 (TIVS…IFFF), 66–86 (FAIS…LISV), 112–132 (FLLD…TWSI), 169–189 (LFLV…LISW), 203–223 (AVIY…LAVL), 242–262 (FVLF…AQFG), 275–295 (TPVS…FLLV), 307–327 (ANTI…STAI), 335–354 (IIAY…IGIG), 365–385 (THAF…HSLN), 404–424 (SACL…AGFY), 445–465 (LGIV…FFCF), 487–507 (ALLR…NFIF), 520–540 (GLPL…LSYL), and 618–638 (YIAS…IVLS).

Belongs to the complex I subunit 5 family.

It is found in the mitochondrion inner membrane. It carries out the reaction a ubiquinone + NADH + 5 H(+)(in) = a ubiquinol + NAD(+) + 4 H(+)(out). Core subunit of the mitochondrial membrane respiratory chain NADH dehydrogenase (Complex I) that is believed to belong to the minimal assembly required for catalysis. Complex I functions in the transfer of electrons from NADH to the respiratory chain. The immediate electron acceptor for the enzyme is believed to be ubiquinone. The polypeptide is NADH-ubiquinone oxidoreductase chain 5 (ND5) (Paracentrotus lividus (Common sea urchin)).